We begin with the raw amino-acid sequence, 168 residues long: Photosystem I assembly protein Ycf3 (168 aa).

3 TPR repeats span residues 35–68 (AFTYYRDGMSAQSDGNYAEALQNYYEATRLEIDP), 72–105 (SYILYNIGLIHTSNGEHTKALEYYFRALERNPFL), and 120–153 (GEQAIRQGDSEIAEAWSDQAAEYWKQAIALTPGN).

The protein belongs to the Ycf3 family.

The protein localises to the plastid. Its subcellular location is the chloroplast thylakoid membrane. In terms of biological role, essential for the assembly of the photosystem I (PSI) complex. May act as a chaperone-like factor to guide the assembly of the PSI subunits. The polypeptide is Photosystem I assembly protein Ycf3 (Chloranthus spicatus (Chulantree)).